The primary structure comprises 555 residues: Potassium-transporting ATPase potassium-binding subunit (555 aa).

10 helical membrane passes run 2 to 22 (IWVA…PTGI), 60 to 80 (QYAL…YFIF), 130 to 150 (IGIT…VMAF), 173 to 193 (VFLP…VPQT), 246 to 266 (MSNI…PFTY), 278 to 298 (ILFV…TTSE), 374 to 394 (AGFV…GLMV), 412 to 432 (LIAV…ALAL), 483 to 503 (LVMF…AASL), and 525 to 545 (GIFI…MLVL).

Belongs to the KdpA family. As to quaternary structure, the system is composed of three essential subunits: KdpA, KdpB and KdpC.

Its subcellular location is the cell membrane. Functionally, part of the high-affinity ATP-driven potassium transport (or Kdp) system, which catalyzes the hydrolysis of ATP coupled with the electrogenic transport of potassium into the cytoplasm. This subunit binds the extracellular potassium ions and delivers the ions to the membrane domain of KdpB through an intramembrane tunnel. In Bacillus cereus (strain AH820), this protein is Potassium-transporting ATPase potassium-binding subunit.